We begin with the raw amino-acid sequence, 324 residues long: MAAAAAAGANGSGGSSGMEVDAAVPSVMASGVTGSVSVALHPLVILNISDHWIRMRSQEGRPMQVIGALIGKQEGRNIEVMNSFELLSHTVEEKIIIDKEYYYTKEEQFKQVFKELEFLGWYTTGGPPDPSDIHVHKQVCEIIESPLFLKLNPMTKHTDLPVSVFESVIDIINGEATMLFAELTYTLATEEAERIGVDHVARMTATGSGENSTVAEHLIAQHSAIKMLHSRVKLILEYVKASEAGEVPFNHEILREAYALCHCLPVLSTDKFKTDFYDQCNDVGLMAYLGTITKTCNTMNQFVNKFNVLYDRQGIGRRMRGLFF.

In terms of domain architecture, MPN spans 38-171 (VALHPLVILN…VSVFESVIDI (134 aa)).

Belongs to the peptidase M67A family. CSN6 subfamily. In terms of assembly, component of the CSN complex, composed of COPS1/GPS1, COPS2, COPS3, COPS4, COPS5, COPS6, COPS7 (COPS7A or COPS7B), COPS8 and COPS9. In the complex, it probably interacts directly with COPS2, COPS4, COPS5, COPS7 (COPS7A or COPS7B) and COPS9. Interacts with the translation initiation factor EIF3S6. Interacts weakly with RBX1. Directly interacts with COP1 and 14-3-3 protein sigma/SFN. Interacts with ERCC6.

Its subcellular location is the cytoplasm. The protein resides in the nucleus. Functionally, component of the COP9 signalosome complex (CSN), a complex involved in various cellular and developmental processes. The CSN complex is an essential regulator of the ubiquitin (Ubl) conjugation pathway by mediating the deneddylation of the cullin subunits of SCF-type E3 ligase complexes, leading to decrease the Ubl ligase activity of SCF-type complexes such as SCF, CSA or DDB2. The complex is also involved in phosphorylation of p53/TP53, c-jun/JUN, IkappaBalpha/NFKBIA, ITPK1 and IRF8, possibly via its association with CK2 and PKD kinases. CSN-dependent phosphorylation of TP53 and JUN promotes and protects degradation by the Ubl system, respectively. Has some glucocorticoid receptor-responsive activity. Stabilizes COP1 through reducing COP1 auto-ubiquitination and decelerating COP1 turnover rate, hence regulates the ubiquitination of COP1 targets, including SFN. This is COP9 signalosome complex subunit 6 (Cops6) from Mus musculus (Mouse).